A 62-amino-acid polypeptide reads, in one-letter code: Temporin-CDYb (62 aa).

An N-terminal signal peptide occupies residues 1–22 (MFTLKKSLLLLFFLGTINLSLC). Residues 23-45 (EEERDADEEERRDDPEERAVQVE) constitute a propeptide that is removed on maturation. Leu-60 carries the post-translational modification Leucine amide.

This sequence belongs to the frog skin active peptide (FSAP) family. Temporin subfamily. As to expression, expressed by the skin glands.

The protein resides in the secreted. Antimicrobial peptide. Has low activity against the Gram-positive bacterium S.aureus (MIC&gt;100 uM) and the Gram-negative bacterium E.coli (MIC&gt;100 uM). Has weak hemolytic activity against human erythrocytes. This Rana dybowskii (Dybovsky's frog) protein is Temporin-CDYb.